The sequence spans 251 residues: HTH-type transcriptional regulator IolR (251 aa).

Positions 1-57 constitute an HTH deoR-type domain; the sequence is MKLMRIQEMEEYILSHGTVSLDELCQVFNVSKNTVRRDINKLTEKGAIEKVYGGVTS. Residues 19–38 constitute a DNA-binding region (H-T-H motif); it reads VSLDELCQVFNVSKNTVRRD.

Iol operon repressor. In Bacillus subtilis (strain 168), this protein is HTH-type transcriptional regulator IolR (iolR).